The chain runs to 451 residues: Coproporphyrinogen III oxidase (451 aa).

FAD contacts are provided by residues 10–15 (GGGISG), 36–37 (DP), 58–61 (GAEA), Val242, Trp393, and 429–431 (IGV).

It belongs to the protoporphyrinogen/coproporphyrinogen oxidase family. Coproporphyrinogen III oxidase subfamily. The cofactor is FAD.

The protein localises to the cytoplasm. It catalyses the reaction coproporphyrinogen III + 3 O2 = coproporphyrin III + 3 H2O2. It functions in the pathway porphyrin-containing compound metabolism; protoheme biosynthesis. Its function is as follows. Involved in coproporphyrin-dependent heme b biosynthesis. Catalyzes the oxidation of coproporphyrinogen III to coproporphyrin III. This Mycobacterium leprae (strain TN) protein is Coproporphyrinogen III oxidase.